The chain runs to 447 residues: N-succinylarginine dihydrolase (447 aa).

Residues 19-28 (AGLSFGNVAS), Asn110, and 137-138 (HR) contribute to the substrate site. Glu174 is a catalytic residue. Arg214 is a binding site for substrate. His250 is a catalytic residue. Substrate-binding residues include Asp252 and Asn364. Catalysis depends on Cys370, which acts as the Nucleophile.

Belongs to the succinylarginine dihydrolase family. Homodimer.

The enzyme catalyses N(2)-succinyl-L-arginine + 2 H2O + 2 H(+) = N(2)-succinyl-L-ornithine + 2 NH4(+) + CO2. It functions in the pathway amino-acid degradation; L-arginine degradation via AST pathway; L-glutamate and succinate from L-arginine: step 2/5. In terms of biological role, catalyzes the hydrolysis of N(2)-succinylarginine into N(2)-succinylornithine, ammonia and CO(2). The sequence is that of N-succinylarginine dihydrolase from Idiomarina loihiensis (strain ATCC BAA-735 / DSM 15497 / L2-TR).